A 337-amino-acid polypeptide reads, in one-letter code: Holliday junction branch migration complex subunit RuvB (337 aa).

Residues 1-179 (MTHQVAVLHQ…FAFSARLSYY (179 aa)) form a large ATPase domain (RuvB-L) region. Residues Leu18, Arg19, Gly60, Lys63, Thr64, Ser65, 126–128 (EDF), Arg169, Tyr179, and Arg216 contribute to the ATP site. Thr64 contacts Mg(2+). A small ATPAse domain (RuvB-S) region spans residues 180–250 (SDQDLKEILV…VAEKALAMLL (71 aa)). Positions 253 to 337 (DWGLNEIDIK…KNLLSLGEGQ (85 aa)) are head domain (RuvB-H). 2 residues coordinate DNA: Lys308 and Arg313.

It belongs to the RuvB family. Homohexamer. Forms an RuvA(8)-RuvB(12)-Holliday junction (HJ) complex. HJ DNA is sandwiched between 2 RuvA tetramers; dsDNA enters through RuvA and exits via RuvB. An RuvB hexamer assembles on each DNA strand where it exits the tetramer. Each RuvB hexamer is contacted by two RuvA subunits (via domain III) on 2 adjacent RuvB subunits; this complex drives branch migration. In the full resolvosome a probable DNA-RuvA(4)-RuvB(12)-RuvC(2) complex forms which resolves the HJ.

It is found in the cytoplasm. It carries out the reaction ATP + H2O = ADP + phosphate + H(+). The RuvA-RuvB-RuvC complex processes Holliday junction (HJ) DNA during genetic recombination and DNA repair, while the RuvA-RuvB complex plays an important role in the rescue of blocked DNA replication forks via replication fork reversal (RFR). RuvA specifically binds to HJ cruciform DNA, conferring on it an open structure. The RuvB hexamer acts as an ATP-dependent pump, pulling dsDNA into and through the RuvAB complex. RuvB forms 2 homohexamers on either side of HJ DNA bound by 1 or 2 RuvA tetramers; 4 subunits per hexamer contact DNA at a time. Coordinated motions by a converter formed by DNA-disengaged RuvB subunits stimulates ATP hydrolysis and nucleotide exchange. Immobilization of the converter enables RuvB to convert the ATP-contained energy into a lever motion, pulling 2 nucleotides of DNA out of the RuvA tetramer per ATP hydrolyzed, thus driving DNA branch migration. The RuvB motors rotate together with the DNA substrate, which together with the progressing nucleotide cycle form the mechanistic basis for DNA recombination by continuous HJ branch migration. Branch migration allows RuvC to scan DNA until it finds its consensus sequence, where it cleaves and resolves cruciform DNA. In Chlamydia pneumoniae (Chlamydophila pneumoniae), this protein is Holliday junction branch migration complex subunit RuvB.